The primary structure comprises 882 residues: Nitrogen regulatory protein areA (882 aa).

The span at 1-13 (MSGLTLGGGGSGG) shows a compositional bias: gly residues. Disordered stretches follow at residues 1-75 (MSGL…PDSL), 139-191 (KRKE…LTSD), 228-257 (SRKDQVAESTPVPASFPHPPQDQRKNSEFG), 325-344 (NNHSSSHHNHTSPGMPFGLD), 394-422 (STDFFSPPQSGYQSTASTPQPAYDGEHSM), 461-545 (NQDQ…DMNG), and 579-675 (MDTP…GPTT). Residues 48 to 59 (SDFSQLSDDFSF) show a composition bias toward low complexity. Polar residues-rich tracts occupy residues 156-169 (NSVSGPSGIAQLTS) and 177-191 (PTRQNPSLSTDLTSD). Positions 325–334 (NNHSSSHHNH) are enriched in basic residues. 2 stretches are compositionally biased toward polar residues: residues 394-413 (STDFFSPPQSGYQSTASTPQ) and 492-503 (QVLNPNDFSTGA). Basic and acidic residues predominate over residues 604 to 613 (VRNREQDPRR). Positions 617–642 (ARTTSTPNTAQLLRQSMNANTSHTSP) are enriched in polar residues. The GATA-type zinc finger occupies 676–700 (CTNCFTQTTPLWRRNPEGQPLCNAC). The disordered stretch occupies residues 723-871 (RNRSSANSLA…NHSIAGGQGA (149 aa)). A compositionally biased stretch (low complexity) spans 745–759 (KNSVQQTTVTTPTSS). The segment covering 795 to 811 (NPTTSSPGQSRGTSSVQ) has biased composition (polar residues). Positions 848-861 (ALAPAMPPAAANPA) are enriched in low complexity.

The protein resides in the nucleus. In terms of biological role, major nitrogen regulatory protein. Positively acting regulatory gene of nitrogen metabolite repression. The protein is Nitrogen regulatory protein areA (areA) of Aspergillus niger.